The chain runs to 202 residues: Remorin 1.4 (202 aa).

Residues 1–10 (MAEEEPKKVT) show a composition bias toward basic and acidic residues. The interval 1–79 (MAEEEPKKVT…VEEEKKEGSV (79 aa)) is disordered. The segment covering 25–39 (EKPAAAADVAPQEKP) has biased composition (low complexity). The span at 40-50 (VAPPPVLPSPA) shows a compositional bias: pro residues. Over residues 68 to 79 (KEVEEEKKEGSV) the composition is skewed to basic and acidic residues. Positions 123 to 169 (ENNKKAAVEAELKKMEEQLEKKKAEYVEQMKNKIAQIHKEAEEKRAM) form a coiled coil.

The protein belongs to the remorin family.

The protein is Remorin 1.4 of Arabidopsis thaliana (Mouse-ear cress).